A 240-amino-acid chain; its full sequence is Ubiquinone biosynthesis O-methyltransferase (240 aa).

Residues R44, G64, D85, and M129 each coordinate S-adenosyl-L-methionine.

The protein belongs to the methyltransferase superfamily. UbiG/COQ3 family.

It carries out the reaction a 3-demethylubiquinol + S-adenosyl-L-methionine = a ubiquinol + S-adenosyl-L-homocysteine + H(+). The enzyme catalyses a 3-(all-trans-polyprenyl)benzene-1,2-diol + S-adenosyl-L-methionine = a 2-methoxy-6-(all-trans-polyprenyl)phenol + S-adenosyl-L-homocysteine + H(+). Its pathway is cofactor biosynthesis; ubiquinone biosynthesis. O-methyltransferase that catalyzes the 2 O-methylation steps in the ubiquinone biosynthetic pathway. The protein is Ubiquinone biosynthesis O-methyltransferase of Escherichia coli O7:K1 (strain IAI39 / ExPEC).